Reading from the N-terminus, the 313-residue chain is MKLTDGVLRSFRVAKVFRENSDKINCFDFSPTGETVISSSDDDSIVLYDCQEGKPKRTLYSKKYGVDLIRYTHAANTVVYSSNKIDDTIRYLSLHDNKYIRYFPGHSKRVVALSMSPVDDTFISASLDKTIRLWDLRSPNCQGLMHLQGKPVCSFDPEGLIFAAGVNSEMVKLYDLRSFDKGPFATFKMQYDRTCEWTSLKFSQDGKLILMSTNGGFLRLVDAFKGAVMHTFGGYNNSKAVTLEASFTPDSQFIMIGSEDGKIHVWNCESGMKVAVLDGKHTGPITCLQFNPKFMTFASACSNMAFWLPTIDD.

6 WD repeats span residues Glu19–Thr58, Gly105–Leu144, His146–Phe184, Asp192–Thr231, Asn236–Val276, and Lys280–Asp313.

It belongs to the WD repeat SWD2 family. As to quaternary structure, component of the SET1/COMPASS complex. Component of the PNUTS-PP1 phosphatase complex.

The protein localises to the nucleus. The protein resides in the chromosome. It localises to the cytoplasm. Its function is as follows. Regulatory component of the SET1/COMPASS complex implicated in the tethering of this complex to transcriptional start sites of active genes. Facilitates histone H3 'Lys-4' methylation (H3K4me) via recruitment of the SETD1A or SETD1B to the 'Ser-5' phosphorylated C-terminal domain (CTD) of RNA polymerase II large subunit (POLR2A). Component of the PNUTS-PP1 protein phosphatase complex, a protein phosphatase 1 (PP1) complex that promotes RNA polymerase II transcription pause-release, allowing transcription elongation. This is WD repeat-containing protein 82-A (wdr82-a) from Xenopus laevis (African clawed frog).